The primary structure comprises 167 residues: Large ribosomal subunit protein uL10 (167 aa).

The protein belongs to the universal ribosomal protein uL10 family. In terms of assembly, part of the ribosomal stalk of the 50S ribosomal subunit. The N-terminus interacts with L11 and the large rRNA to form the base of the stalk. The C-terminus forms an elongated spine to which L12 dimers bind in a sequential fashion forming a multimeric L10(L12)X complex.

Its function is as follows. Forms part of the ribosomal stalk, playing a central role in the interaction of the ribosome with GTP-bound translation factors. This chain is Large ribosomal subunit protein uL10, found in Psychromonas ingrahamii (strain DSM 17664 / CCUG 51855 / 37).